We begin with the raw amino-acid sequence, 231 residues long: MKINQVVLIRHGQSEWNTLNKFTGWHDAELDKKGKDEAKFAAILLKKEKFFFDCAHTSLLKRAIHTLQYILDELNQTWLSVKKSWRLNERHYGALEGLNKDEVIEKYGQKQVLLWRRSFDISPPQINIKDKRFPGNDPRYSHLNIHDIPLGESLEKTAKRVIPYWNKIVYPELKNNKKILIVAHGNSLRALIQHLYKIDNKAILDLNIPTAQPIILDFDNEKNPIKWHYLT.

Substrate-binding positions include arginine 10–asparagine 17, threonine 23–glycine 24, arginine 62, glutamate 89–tyrosine 92, lysine 100, arginine 116–arginine 117, and glycine 185–asparagine 186. The active-site Tele-phosphohistidine intermediate is the histidine 11. Glutamate 89 (proton donor/acceptor) is an active-site residue.

Belongs to the phosphoglycerate mutase family. BPG-dependent PGAM subfamily. In terms of assembly, homodimer.

The enzyme catalyses (2R)-2-phosphoglycerate = (2R)-3-phosphoglycerate. The protein operates within carbohydrate degradation; glycolysis; pyruvate from D-glyceraldehyde 3-phosphate: step 3/5. Catalyzes the interconversion of 2-phosphoglycerate and 3-phosphoglycerate. The chain is 2,3-bisphosphoglycerate-dependent phosphoglycerate mutase from Buchnera aphidicola subsp. Acyrthosiphon pisum (strain APS) (Acyrthosiphon pisum symbiotic bacterium).